Reading from the N-terminus, the 502-residue chain is Neuronal acetylcholine receptor subunit alpha-7 (502 aa).

The signal sequence occupies residues M1–Q22. Over G23–Y233 the chain is Extracellular. The Ca(2+) site is built by R42 and V44. N46, N90, and N133 each carry an N-linked (GlcNAc...) asparagine glycan. C150 and C164 are joined by a disulfide. Ca(2+) contacts are provided by S172 and Y210. Cysteines 212 and 213 form a disulfide. Transmembrane regions (helical) follow at residues G234–L254, G259–V279, and L292–L315. Positions E260–T267 are essential for TMEM35A/NACHO-mediated proper subunit assembly and trafficking to cell membrane. Over Q316–V466 the chain is Cytoplasmic. A helical membrane pass occupies residues V467 to S489.

The protein belongs to the ligand-gated ion channel (TC 1.A.9) family. Acetylcholine receptor (TC 1.A.9.1) subfamily. Alpha-7/CHRNA7 sub-subfamily. In terms of assembly, homopentamer. Can also form heteropentamers with CHRNB2, mainly found in basal forebrain cholinergic neurons. Interacts with RIC3; which is required for proper folding and assembly. Interacts with LYPD6. Interacts with CANX. In terms of processing, glycosylations at Asn-46, Asn-90 and Asn-133 are essential for TMEM35A/NACHO-mediated proper subunit assembly and trafficking to the cell membrane. Expressed in neuronal cells. Expressed in macrophages (at protein level).

Its subcellular location is the postsynaptic cell membrane. The protein resides in the cell membrane. It carries out the reaction Ca(2+)(in) = Ca(2+)(out). The enzyme catalyses K(+)(in) = K(+)(out). It catalyses the reaction Na(+)(in) = Na(+)(out). The catalysed reaction is choline(out) = choline(in). It carries out the reaction NH4(+)(in) = NH4(+)(out). The enzyme catalyses L-arginine(in) = L-arginine(out). It catalyses the reaction guanidine(out) = guanidine(in). Activated by a myriad of ligands such as acetylcholine, cytisine, nicotine, choline and epibatidine. Oligomeric amyloid-beta protein 42 activates specifially CHRNA7:CHRNB2 nAchRs. Activity is modulated by positive allosteric modulators (PAMs), such as flavonoids, with a wide range of chemical diversity, pharmacological sensitivity and efficacy. AChR activity is inhibited by the antagonists alpha-conotoxons RgIA, ImI and ImII, small disulfide-constrained peptides from cone snails. Alpha-conotoxin PnIC selectively inhibits CHRNA7:CHRNB2 over CHRNA7 homopentamer. In terms of biological role, component of neuronal acetylcholine receptors (nAChRs) that function as pentameric, ligand-gated cation channels with high calcium permeability among other activities. nAChRs are excitatory neurotrasnmitter receptors formed by a collection of nAChR subunits known to mediate synaptic transmission in the nervous system and the neuromuscular junction. Each nAchR subunit confers differential attributes to channel properties, including activation, deactivation and desensitization kinetics, pH sensitivity, cation permeability, and binding to allosteric modulators. CHRNA7 forms homopentameric neuronal acetylcholine receptors abundantly expressed in the central nervous system, characterized by fast desensitization and high calcium permeability. Also forms heteropentamers with CHRNB2, mainly expressed in basal forebrain cholinergic neurons. Involved in the modulation of calcium-dependent signaling pathways and influences the release of neurotransmitters, including dopamine, glutamate and GABA. Also expressed in non-neuronal cells such as immune cells like lymphocytes, monocytes and macrophages. In T cells, activation induces metabotropic signaling that results in an increase of intracellular Ca2+ concentrations, independent of ionotropic receptor functions. In macrophages, required for acetylcholine-mediated inhibition of TNF and other inflammatory cytokine release. Once activated by acetylcholine, nicotine or other agonists, selectively inhibits production of pro-inflammatory cytokines while leaving anti-inflammatory cytokines undisturbed. Stimulates the cholinergic anti-inflammatory pathway, controlling inflammation by inhibiting NFKB nuclear translocation and activating the JAK2-STAT3 pathway, independently of ion channel activity. Also expressed in the urothelium where it modulates reflex bladder activity by increasing intracellular calcium through internal stores and decreasing basal ATP release. This chain is Neuronal acetylcholine receptor subunit alpha-7, found in Homo sapiens (Human).